The chain runs to 199 residues: Adenylyl-sulfate kinase (199 aa).

An ATP-binding site is contributed by 34 to 41; the sequence is GLSGSGKS. Ser-108 serves as the catalytic Phosphoserine intermediate.

It belongs to the APS kinase family.

It carries out the reaction adenosine 5'-phosphosulfate + ATP = 3'-phosphoadenylyl sulfate + ADP + H(+). It participates in sulfur metabolism; hydrogen sulfide biosynthesis; sulfite from sulfate: step 2/3. In terms of biological role, catalyzes the synthesis of activated sulfate. This chain is Adenylyl-sulfate kinase, found in Staphylococcus carnosus (strain TM300).